The chain runs to 101 residues: Chaperone modulatory protein CbpM (101 aa).

This sequence belongs to the CbpM family.

Functionally, interacts with CbpA and inhibits both the DnaJ-like co-chaperone activity and the DNA binding activity of CbpA. Together with CbpA, modulates the activity of the DnaK chaperone system. Does not inhibit the co-chaperone activity of DnaJ. The chain is Chaperone modulatory protein CbpM from Pseudomonas entomophila (strain L48).